A 465-amino-acid chain; its full sequence is Methylenetetrahydrofolate--tRNA-(uracil-5-)-methyltransferase TrmFO (465 aa).

10 to 15 lines the FAD pocket; the sequence is GAGLAG.

It belongs to the MnmG family. TrmFO subfamily. FAD is required as a cofactor.

It localises to the cytoplasm. It carries out the reaction uridine(54) in tRNA + (6R)-5,10-methylene-5,6,7,8-tetrahydrofolate + NADH + H(+) = 5-methyluridine(54) in tRNA + (6S)-5,6,7,8-tetrahydrofolate + NAD(+). The catalysed reaction is uridine(54) in tRNA + (6R)-5,10-methylene-5,6,7,8-tetrahydrofolate + NADPH + H(+) = 5-methyluridine(54) in tRNA + (6S)-5,6,7,8-tetrahydrofolate + NADP(+). Its function is as follows. Catalyzes the folate-dependent formation of 5-methyl-uridine at position 54 (M-5-U54) in all tRNAs. The chain is Methylenetetrahydrofolate--tRNA-(uracil-5-)-methyltransferase TrmFO from Deinococcus radiodurans (strain ATCC 13939 / DSM 20539 / JCM 16871 / CCUG 27074 / LMG 4051 / NBRC 15346 / NCIMB 9279 / VKM B-1422 / R1).